Reading from the N-terminus, the 295-residue chain is Vesicle-associated protein 4-2 (295 aa).

The segment covering 1–10 has biased composition (basic and acidic residues); that stretch reads MTMTEEKPTS. Residues 1–99 form a disordered region; it reads MTMTEEKPTS…PSPSVSSVAK (99 aa). The span at 31-53 shows a compositional bias: low complexity; sequence NAASSAATSPFPSGASSSSTSSH. Basic residues predominate over residues 54 to 71; sequence LHNHHQHHHQHHHQHHHQ. Positions 83-98 are enriched in polar residues; the sequence is GQNQHPTPSPSVSSVA. One can recognise an MSP domain in the interval 107–229; it reads RLKLDPSEKL…KEQILRVIFL (123 aa). Over residues 249–263 the composition is skewed to basic and acidic residues; the sequence is DAAVEARKKPPEETG. Positions 249 to 270 are disordered; it reads DAAVEARKKPPEETGPKMIGEG. Position 294 is a phosphoserine (S294).

It belongs to the VAMP-associated protein (VAP) (TC 9.B.17) family.

May play a role in vesicle trafficking. The polypeptide is Vesicle-associated protein 4-2 (PVA42) (Arabidopsis thaliana (Mouse-ear cress)).